A 584-amino-acid polypeptide reads, in one-letter code: Proteasome-associated ATPase (584 aa).

Residues 8-90 (RHAERDRDEL…KEEVDRLSQP (83 aa)) adopt a coiled-coil conformation. 272–277 (GCGKTL) serves as a coordination point for ATP. The segment at 583-584 (YL) is docks into pockets in the proteasome alpha-ring.

This sequence belongs to the AAA ATPase family. Homohexamer. Assembles into a hexameric ring structure that caps the 20S proteasome core. Strongly interacts with the prokaryotic ubiquitin-like protein Pup through a hydrophobic interface; the interacting region of ARC lies in its N-terminal coiled-coil domain. There is one Pup binding site per ARC hexamer ring. Upon ATP-binding, the C-terminus of ARC interacts with the alpha-rings of the proteasome core, possibly by binding to the intersubunit pockets.

The protein operates within protein degradation; proteasomal Pup-dependent pathway. ATPase which is responsible for recognizing, binding, unfolding and translocation of pupylated proteins into the bacterial 20S proteasome core particle. May be essential for opening the gate of the 20S proteasome via an interaction with its C-terminus, thereby allowing substrate entry and access to the site of proteolysis. Thus, the C-termini of the proteasomal ATPase may function like a 'key in a lock' to induce gate opening and therefore regulate proteolysis. The sequence is that of Proteasome-associated ATPase from Thermobifida fusca (strain YX).